A 100-amino-acid chain; its full sequence is Small ribosomal subunit protein uS14c (100 aa).

The protein belongs to the universal ribosomal protein uS14 family. Part of the 30S ribosomal subunit.

It is found in the plastid. The protein resides in the chloroplast. In terms of biological role, binds 16S rRNA, required for the assembly of 30S particles. This is Small ribosomal subunit protein uS14c from Aethionema grandiflorum (Persian stone-cress).